We begin with the raw amino-acid sequence, 518 residues long: Trigger factor (518 aa).

Positions 170–255 (GDVVVIDFVG…VKGLESPQEA (86 aa)) constitute a PPIase FKBP-type domain. The segment at 447 to 518 (EAPAKPAKKA…AKKAAAKKDA (72 aa)) is disordered. Composition is skewed to basic residues over residues 452–468 (PAKK…KKAA) and 501–518 (PAAK…KKDA).

The protein belongs to the FKBP-type PPIase family. Tig subfamily.

The protein localises to the cytoplasm. The catalysed reaction is [protein]-peptidylproline (omega=180) = [protein]-peptidylproline (omega=0). Functionally, involved in protein export. Acts as a chaperone by maintaining the newly synthesized protein in an open conformation. Functions as a peptidyl-prolyl cis-trans isomerase. The polypeptide is Trigger factor (Maricaulis maris (strain MCS10) (Caulobacter maris)).